A 311-amino-acid chain; its full sequence is Geranylgeranyl transferase type-2 subunit alpha (311 aa).

A coiled-coil region spans residues 12-43 (EKAKAQRLKELEKIESYNKLVKSFEELREKQN). 5 PFTA repeats span residues 49–82 (ISLS…TETK), 93–126 (NEMK…DNCD), 129–162 (REMK…NIKL), 164–197 (DELK…YKEP), and 206–239 (EEFE…KSIP).

It belongs to the protein prenyltransferase subunit alpha family. As to quaternary structure, heterodimer of an alpha and a beta subunit.

The catalysed reaction is geranylgeranyl diphosphate + L-cysteinyl-[protein] = S-geranylgeranyl-L-cysteinyl-[protein] + diphosphate. Catalyzes the transfer of a geranylgeranyl moiety from geranylgeranyl diphosphate to proteins with a C-terminal sequence motif -XCC or -XCXC, where both cysteines may become modified. This Dictyostelium discoideum (Social amoeba) protein is Geranylgeranyl transferase type-2 subunit alpha (rabggta).